Consider the following 241-residue polypeptide: Probable transcriptional regulatory protein Rmet_0785 (241 aa).

This sequence belongs to the TACO1 family.

Its subcellular location is the cytoplasm. The sequence is that of Probable transcriptional regulatory protein Rmet_0785 from Cupriavidus metallidurans (strain ATCC 43123 / DSM 2839 / NBRC 102507 / CH34) (Ralstonia metallidurans).